A 319-amino-acid chain; its full sequence is ATP-dependent 6-phosphofructokinase (319 aa).

Position 11 (glycine 11) interacts with ATP. Residue 21-25 (RAVVR) coordinates ADP. ATP contacts are provided by residues 72 to 73 (RC) and 102 to 105 (GDGS). Mg(2+) is bound at residue aspartate 103. 125-127 (TID) is a binding site for substrate. The active-site Proton acceptor is the aspartate 127. Arginine 154 is an ADP binding site. Residues arginine 162 and 169 to 171 (MGR) each bind substrate. Residues 185 to 187 (GAE), arginine 211, and 213 to 215 (KKH) contribute to the ADP site. Substrate-binding positions include glutamate 222, arginine 243, and 249–252 (HIQR).

This sequence belongs to the phosphofructokinase type A (PFKA) family. ATP-dependent PFK group I subfamily. Prokaryotic clade 'B1' sub-subfamily. As to quaternary structure, homotetramer. Mg(2+) is required as a cofactor.

It is found in the cytoplasm. It carries out the reaction beta-D-fructose 6-phosphate + ATP = beta-D-fructose 1,6-bisphosphate + ADP + H(+). The protein operates within carbohydrate degradation; glycolysis; D-glyceraldehyde 3-phosphate and glycerone phosphate from D-glucose: step 3/4. Allosterically activated by ADP and other diphosphonucleosides, and allosterically inhibited by phosphoenolpyruvate. Its function is as follows. Catalyzes the phosphorylation of D-fructose 6-phosphate to fructose 1,6-bisphosphate by ATP, the first committing step of glycolysis. The sequence is that of ATP-dependent 6-phosphofructokinase from Halalkalibacterium halodurans (strain ATCC BAA-125 / DSM 18197 / FERM 7344 / JCM 9153 / C-125) (Bacillus halodurans).